A 137-amino-acid chain; its full sequence is Nucleoside diphosphate kinase (137 aa).

Residues lysine 9, phenylalanine 57, arginine 85, threonine 91, arginine 102, and asparagine 112 each coordinate ATP. Histidine 115 functions as the Pros-phosphohistidine intermediate in the catalytic mechanism.

This sequence belongs to the NDK family. Homotetramer. Requires Mg(2+) as cofactor.

Its subcellular location is the cytoplasm. The catalysed reaction is a 2'-deoxyribonucleoside 5'-diphosphate + ATP = a 2'-deoxyribonucleoside 5'-triphosphate + ADP. The enzyme catalyses a ribonucleoside 5'-diphosphate + ATP = a ribonucleoside 5'-triphosphate + ADP. Major role in the synthesis of nucleoside triphosphates other than ATP. The ATP gamma phosphate is transferred to the NDP beta phosphate via a ping-pong mechanism, using a phosphorylated active-site intermediate. This chain is Nucleoside diphosphate kinase, found in Campylobacter concisus (strain 13826).